Reading from the N-terminus, the 272-residue chain is Dickkopf-related protein 1 (272 aa).

An N-terminal signal peptide occupies residues 1–31 (MMVVCAAAAVRFLAVFTMMALCSLPLLGASA). S62 carries an O-linked (GalNAc...) serine glycan. 10 cysteine pairs are disulfide-bonded: C86-C98, C92-C114, C117-C131, C124-C136, C130-C141, C195-C207, C201-C216, C206-C243, C226-C251, and C245-C269. Residues 86–141 (CAEDEECGSDEYCSSPSRGAAGVGGVQICLACRKRRKRCMRHAMCCPGNYCKNGIC) form a DKK-type Cys-1 region. Residues 195 to 269 (CLRSSDCAAG…ASNSSRLHTC (75 aa)) form a DKK-type Cys-2 region. N262 carries an N-linked (GlcNAc...) asparagine glycan.

It belongs to the dickkopf family. As to quaternary structure, interacts (via the C-terminal Cys-rich domain) with LRP5 (via beta-propeller regions 3 and 4); the interaction, enhanced by MESD and or KREMEN, antagonizes Wnt-mediated signaling. Interacts with LRP6. Forms a ternary complex with LRP6 and KREM1. Interacts with KREM1.

It localises to the secreted. Its function is as follows. Antagonizes canonical Wnt signaling by inhibiting LRP5/6 interaction with Wnt and by forming a ternary complex with the transmembrane protein KREMEN that promotes internalization of LRP5/6. Inhibits the pro-apoptotic function of KREMEN1 in a Wnt-independent manner, and has anti-apoptotic activity. Plays a role in limb development; attenuates Wnt signaling in the developing limb to allow normal limb patterning. This Mus musculus (Mouse) protein is Dickkopf-related protein 1 (Dkk1).